The chain runs to 151 residues: Cysteine proteinase inhibitor 10 (151 aa).

An N-terminal signal peptide occupies residues 1-22 (MATSPMLFLVSLLLVLVAAATG). Positions 40–109 (GGRTEIRDVG…GVAYYLKVAA (70 aa)) constitute a Cystatin domain. Positions 96–100 (QVVSG) match the Secondary area of contact motif.

This sequence belongs to the cystatin family. Phytocystatin subfamily.

It is found in the secreted. Specific inhibitor of cysteine proteinases. Probably involved in the regulation of endogenous processes and in defense against pests and pathogens. In Oryza sativa subsp. indica (Rice), this protein is Cysteine proteinase inhibitor 10.